The following is a 185-amino-acid chain: MSKEVLNDAEQRMTKATEALGRELAKLRAGRANPAMLDRITVEYYGAETPLNQLATISVPEARLLVIQPFDKSSISDIERAIQKSDLGLTPSNDGTVIRITIPPLTEERRRDLTKLVKKSAEEAKVAVRNIRRDANDDLKKRQKDGELTEDDLRRVTEDVQKLTDKYIEQIDQKAEAKEKEIMEV.

Belongs to the RRF family.

The protein localises to the cytoplasm. Responsible for the release of ribosomes from messenger RNA at the termination of protein biosynthesis. May increase the efficiency of translation by recycling ribosomes from one round of translation to another. The polypeptide is Ribosome-recycling factor (Halalkalibacterium halodurans (strain ATCC BAA-125 / DSM 18197 / FERM 7344 / JCM 9153 / C-125) (Bacillus halodurans)).